Reading from the N-terminus, the 274-residue chain is Serine/threonine-protein kinase 1 (274 aa).

A Protein kinase domain is found at 17–265 (ARTALHLVNG…YEVIQKNTYW (249 aa)). ATP-binding positions include 23–31 (LVNGKFGKV) and Lys-46. Asp-133 acts as the Proton acceptor in catalysis.

It belongs to the protein kinase superfamily. Ser/Thr protein kinase family.

The enzyme catalyses L-seryl-[protein] + ATP = O-phospho-L-seryl-[protein] + ADP + H(+). It carries out the reaction L-threonyl-[protein] + ATP = O-phospho-L-threonyl-[protein] + ADP + H(+). Functionally, in vitro, can phosphorylate histone H1. This Lymantria dispar multicapsid nuclear polyhedrosis virus (LdMNPV) protein is Serine/threonine-protein kinase 1 (PK1).